The primary structure comprises 444 residues: Na(+)-translocating NADH-quinone reductase subunit A (444 aa).

The protein belongs to the NqrA family. As to quaternary structure, composed of six subunits; NqrA, NqrB, NqrC, NqrD, NqrE and NqrF.

The catalysed reaction is a ubiquinone + n Na(+)(in) + NADH + H(+) = a ubiquinol + n Na(+)(out) + NAD(+). In terms of biological role, NQR complex catalyzes the reduction of ubiquinone-1 to ubiquinol by two successive reactions, coupled with the transport of Na(+) ions from the cytoplasm to the periplasm. NqrA to NqrE are probably involved in the second step, the conversion of ubisemiquinone to ubiquinol. This chain is Na(+)-translocating NADH-quinone reductase subunit A, found in Shewanella denitrificans (strain OS217 / ATCC BAA-1090 / DSM 15013).